The following is a 2211-amino-acid chain: Nonribosomal peptide synthetase 13 (2211 aa).

The adenylation 1 stretch occupies residues 76 to 475 (TYAELDSLSD…IEHHLQLTLP (400 aa)). The 78-residue stretch at 594–671 (PPSTPKEATI…EQSKRAGLIQ (78 aa)) folds into the Carrier 1 domain. Residue serine 631 is modified to O-(pantetheine 4'-phosphoryl)serine. The interval 710-975 (EDIYPCTALQ…IATVPTRIRV (266 aa)) is condensation 1. Residues 1169–1563 (TYRELWAHSS…LGAVEASVMR (395 aa)) are adenylation 2. Residues 1677–1756 (PMSDDNERRL…RSRHLITEQA (80 aa)) enclose the Carrier 2 domain. Position 1714 is an O-(pantetheine 4'-phosphoryl)serine (serine 1714). The tract at residues 1814–2069 (HFQFDLSGAV…CTNYIPYRLS (256 aa)) is condensation 2.

This sequence belongs to the NRP synthetase family.

It carries out the reaction L-proline + L-tryptophan + 2 ATP = brevianamide F + 2 AMP + 2 diphosphate + 2 H(+). Its pathway is mycotoxin biosynthesis. Nonribosomal peptide synthetase; part of the gene cluster that mediates the biosynthesis of fumitremorgins, indole alkaloids that carry not only intriguing chemical structures, but also interesting biological and pharmacological activities. The biosynthesis of fumitremorgin-type alkaloids begins by condensation of the two amino acids L-tryptophan and L-proline to brevianamide F, catalyzed by the non-ribosomal peptide synthetase ftmA. Brevianamide F is then prenylated by the prenyltransferase ftmPT1/ftmB in the presence of dimethylallyl diphosphate, resulting in the formation of tryprostatin B. The three cytochrome P450 monooxygenases, ftmP450-1/ftmC, ftmP450-2/ftmE and ftmP450-3/FtmG, are responsible for the conversion of tryprostatin B to 6-hydroxytryprostatin B, tryprostatin A to fumitremorgin C and fumitremorgin C to 12,13-dihydroxyfumitremorgin C, respectively. The putative methyltransferase ftmMT/ftmD is expected for the conversion of 6-hydroxytryprostatin B to tryprostatin A. FtmPT2/FtmH catalyzes the prenylation of 12,13-dihydroxyfumitre-morgin C in the presence of dimethylallyl diphosphate, resulting in the formation of fumitremorgin B. Fumitremorgin B is further converted to verruculogen by ftmOx1/ftmF via the insertion of an endoperoxide bond between the two prenyl moieties. In some fungal species, verruculogen is further converted to fumitremorgin A, but the enzymes involved in this step have not been identified yet. The chain is Nonribosomal peptide synthetase 13 from Aspergillus fumigatus (Neosartorya fumigata).